Consider the following 125-residue polypeptide: Large ribosomal subunit protein bL12 (125 aa).

This sequence belongs to the bacterial ribosomal protein bL12 family. Homodimer. Part of the ribosomal stalk of the 50S ribosomal subunit. Forms a multimeric L10(L12)X complex, where L10 forms an elongated spine to which 2 to 4 L12 dimers bind in a sequential fashion. Binds GTP-bound translation factors.

In terms of biological role, forms part of the ribosomal stalk which helps the ribosome interact with GTP-bound translation factors. Is thus essential for accurate translation. In Endomicrobium trichonymphae, this protein is Large ribosomal subunit protein bL12.